A 587-amino-acid chain; its full sequence is 2-succinyl-5-enolpyruvyl-6-hydroxy-3-cyclohexene-1-carboxylate synthase (587 aa).

Belongs to the TPP enzyme family. MenD subfamily. In terms of assembly, homodimer. It depends on Mg(2+) as a cofactor. Mn(2+) serves as cofactor. Requires thiamine diphosphate as cofactor.

It carries out the reaction isochorismate + 2-oxoglutarate + H(+) = 5-enolpyruvoyl-6-hydroxy-2-succinyl-cyclohex-3-ene-1-carboxylate + CO2. Its pathway is quinol/quinone metabolism; 1,4-dihydroxy-2-naphthoate biosynthesis; 1,4-dihydroxy-2-naphthoate from chorismate: step 2/7. The protein operates within cofactor biosynthesis; phylloquinone biosynthesis. Catalyzes the thiamine diphosphate-dependent decarboxylation of 2-oxoglutarate and the subsequent addition of the resulting succinic semialdehyde-thiamine pyrophosphate anion to isochorismate to yield 2-succinyl-5-enolpyruvyl-6-hydroxy-3-cyclohexene-1-carboxylate (SEPHCHC). The chain is 2-succinyl-5-enolpyruvyl-6-hydroxy-3-cyclohexene-1-carboxylate synthase from Prochlorococcus marinus (strain MIT 9312).